A 230-amino-acid polypeptide reads, in one-letter code: Thiamine-triphosphatase (230 aa).

Alanine 2 carries the N-acetylalanine modification. The CYTH domain maps to 5–201 (LIEVERKFLP…AKLIVYLQRF (197 aa)). Mg(2+) is bound by residues glutamate 7 and glutamate 9. Residues lysine 11, arginine 55, arginine 57, lysine 65, and arginine 125 each coordinate substrate. Mg(2+) is bound by residues aspartate 145, glutamate 157, and glutamate 159. Glutamate 157 lines the substrate pocket. A substrate-binding site is contributed by lysine 193.

It belongs to the ThTPase family. Monomer. Mg(2+) serves as cofactor.

The protein resides in the cytoplasm. It carries out the reaction thiamine triphosphate + H2O = thiamine diphosphate + phosphate + H(+). Functionally, hydrolase highly specific for thiamine triphosphate (ThTP). The polypeptide is Thiamine-triphosphatase (THTPA) (Macaca fascicularis (Crab-eating macaque)).